Consider the following 539-residue polypeptide: Chaperonin GroEL (539 aa).

Residues 29–32 (TLGP), 86–90 (DGTTT), G413, and D494 each bind ATP.

The protein belongs to the chaperonin (HSP60) family. In terms of assembly, forms a cylinder of 14 subunits composed of two heptameric rings stacked back-to-back. Interacts with the co-chaperonin GroES.

Its subcellular location is the cytoplasm. It catalyses the reaction ATP + H2O + a folded polypeptide = ADP + phosphate + an unfolded polypeptide.. Functionally, together with its co-chaperonin GroES, plays an essential role in assisting protein folding. The GroEL-GroES system forms a nano-cage that allows encapsulation of the non-native substrate proteins and provides a physical environment optimized to promote and accelerate protein folding. This chain is Chaperonin GroEL, found in Finegoldia magna (strain ATCC 29328 / DSM 20472 / WAL 2508) (Peptostreptococcus magnus).